We begin with the raw amino-acid sequence, 414 residues long: Mannan endo-1,4-beta-mannosidase 3 (414 aa).

The signal sequence occupies residues 1–19; that stretch reads MKCLCFVVLLAILIAQNSS. N-linked (GlcNAc...) asparagine glycans are attached at residues Asn17 and Asn75. Position 87 (Trp87) interacts with substrate. N-linked (GlcNAc...) asparagine glycosylation is found at Asn133 and Asn153. Asn202 is a substrate binding site. The active-site Proton donor is the Glu203. Tyr283 provides a ligand contact to substrate. Glu323 functions as the Nucleophile in the catalytic mechanism. N-linked (GlcNAc...) asparagine glycosylation is present at Asn343. Trp365 contacts substrate. Asn386 carries N-linked (GlcNAc...) asparagine glycosylation.

It belongs to the glycosyl hydrolase 5 (cellulase A) family. As to expression, expressed in leaves, flowers, siliques and seeds.

Its subcellular location is the secreted. It catalyses the reaction Random hydrolysis of (1-&gt;4)-beta-D-mannosidic linkages in mannans, galactomannans and glucomannans.. The protein is Mannan endo-1,4-beta-mannosidase 3 (MAN3) of Arabidopsis thaliana (Mouse-ear cress).